The chain runs to 261 residues: 4-hydroxy-tetrahydrodipicolinate reductase (261 aa).

NAD(+)-binding positions include 11–16 (GFMGAM), 96–98 (GTT), and 122–125 (APNF). The active-site Proton donor/acceptor is the His-152. Position 153 (His-153) interacts with (S)-2,3,4,5-tetrahydrodipicolinate. Lys-156 acts as the Proton donor in catalysis. (S)-2,3,4,5-tetrahydrodipicolinate is bound at residue 162-163 (GT).

It belongs to the DapB family.

It localises to the cytoplasm. The enzyme catalyses (S)-2,3,4,5-tetrahydrodipicolinate + NAD(+) + H2O = (2S,4S)-4-hydroxy-2,3,4,5-tetrahydrodipicolinate + NADH + H(+). It carries out the reaction (S)-2,3,4,5-tetrahydrodipicolinate + NADP(+) + H2O = (2S,4S)-4-hydroxy-2,3,4,5-tetrahydrodipicolinate + NADPH + H(+). Its pathway is amino-acid biosynthesis; L-lysine biosynthesis via DAP pathway; (S)-tetrahydrodipicolinate from L-aspartate: step 4/4. In terms of biological role, catalyzes the conversion of 4-hydroxy-tetrahydrodipicolinate (HTPA) to tetrahydrodipicolinate. The protein is 4-hydroxy-tetrahydrodipicolinate reductase of Lactobacillus helveticus (strain DPC 4571).